Here is a 105-residue protein sequence, read N- to C-terminus: DNA-directed RNA polymerases I and III subunit RPAC2 (105 aa).

It belongs to the archaeal Rpo11/eukaryotic RPB11/RPC19 RNA polymerase subunit family. In terms of assembly, component of the RNA polymerase I (Pol I) and RNA polymerase III (Pol III) complexes consisting of at least 13 and 17 subunits, respectively.

The protein resides in the nucleus. DNA-dependent RNA polymerase catalyzes the transcription of DNA into RNA using the four ribonucleoside triphosphates as substrates. Common core component of RNA polymerases I and III which synthesize ribosomal RNA precursors and small RNAs, such as 5S rRNA and tRNAs, respectively. The chain is DNA-directed RNA polymerases I and III subunit RPAC2 from Drosophila melanogaster (Fruit fly).